A 415-amino-acid chain; its full sequence is Putative F-box protein At5g40050 (415 aa).

Positions 13–59 constitute an F-box domain; the sequence is IDSISPLPDELLSHILSFLPTKRAASTSILSKRWRTLFPLMNHLCAS.

In Arabidopsis thaliana (Mouse-ear cress), this protein is Putative F-box protein At5g40050.